We begin with the raw amino-acid sequence, 177 residues long: Large ribosomal subunit protein uL6 (177 aa).

Belongs to the universal ribosomal protein uL6 family. Part of the 50S ribosomal subunit.

Its function is as follows. This protein binds to the 23S rRNA, and is important in its secondary structure. It is located near the subunit interface in the base of the L7/L12 stalk, and near the tRNA binding site of the peptidyltransferase center. The chain is Large ribosomal subunit protein uL6 from Rhodopseudomonas palustris (strain HaA2).